The primary structure comprises 360 residues: Phosphoserine aminotransferase (360 aa).

Arg-42 provides a ligand contact to L-glutamate. Pyridoxal 5'-phosphate contacts are provided by residues 76–77 (AS), Trp-102, Thr-152, Asp-171, and Gln-194. Lys-195 carries the post-translational modification N6-(pyridoxal phosphate)lysine. Residue 236–237 (NT) coordinates pyridoxal 5'-phosphate.

Belongs to the class-V pyridoxal-phosphate-dependent aminotransferase family. SerC subfamily. Homodimer. It depends on pyridoxal 5'-phosphate as a cofactor.

It localises to the cytoplasm. The catalysed reaction is O-phospho-L-serine + 2-oxoglutarate = 3-phosphooxypyruvate + L-glutamate. It carries out the reaction 4-(phosphooxy)-L-threonine + 2-oxoglutarate = (R)-3-hydroxy-2-oxo-4-phosphooxybutanoate + L-glutamate. Its pathway is amino-acid biosynthesis; L-serine biosynthesis; L-serine from 3-phospho-D-glycerate: step 2/3. In terms of biological role, catalyzes the reversible conversion of 3-phosphohydroxypyruvate to phosphoserine and of 3-hydroxy-2-oxo-4-phosphonooxybutanoate to phosphohydroxythreonine. This chain is Phosphoserine aminotransferase, found in Geobacillus kaustophilus (strain HTA426).